Consider the following 350-residue polypeptide: Secreted effector protein PipB2 (350 aa).

Pentapeptide repeat domains are found at residues 162-201, 202-241, 247-286, and 287-326; these read ANLT…NLSG, ASLG…SLLG, CNCS…IMEG, and AVLT…TLTD.

In terms of assembly, interacts with the host kinesin light chain (KLC), a subunit of the kinesin-1 motor complex.

The protein localises to the secreted. It localises to the host membrane. Its function is as follows. Effector proteins function to alter host cell physiology and promote bacterial survival in host tissues. Involved in the reorganization of late endosome/lysosome (LE/Lys) compartments in mammalian cells. Necessary and sufficient to link kinesin-1 onto the Salmonella-containing vacuole (SCV) membrane. Required for centrifugal extension of lysosomal glycoprotein-rich membrane tubules, known as Salmonella-induced filaments (Sifs), away from the SCV and toward the cell periphery. Required for virulence, but not for intracellular survival and replication in phagocytic cells. The sequence is that of Secreted effector protein PipB2 (pipB2) from Salmonella typhi.